The sequence spans 484 residues: Arginyl-tRNA--protein transferase 1 (484 aa).

Belongs to the R-transferase family.

It carries out the reaction an N-terminal L-alpha-aminoacyl-[protein] + L-arginyl-tRNA(Arg) = an N-terminal L-arginyl-L-aminoacyl-[protein] + tRNA(Arg) + H(+). Involved in the post-translational conjugation of arginine to the N-terminal aspartate or glutamate of a protein. This arginylation is required for degradation of the protein via the ubiquitin pathway. Does not arginylate cysteine residues. This Drosophila melanogaster (Fruit fly) protein is Arginyl-tRNA--protein transferase 1 (Ate1).